The primary structure comprises 879 residues: Nuclear autoantigen Sp-100 (879 aa).

An N-acetylalanine modification is found at Ala2. Residue Ser18 is modified to Phosphoserine. In terms of domain architecture, HSR spans Asp33 to His149. Positions Leu154–Thr245 are disordered. Phosphoserine is present on Ser157. The short motif at Arg165–Leu168 is the D-box; recognition signal for CDC20-mediated degradation element. Phosphoserine occurs at positions 171, 180, and 228. The segment covering Thr176–Pro200 has biased composition (polar residues). Positions His207–Ser228 are enriched in basic and acidic residues. The span at Leu229–Cys238 shows a compositional bias: polar residues. Lys241 is covalently cross-linked (Glycyl lysine isopeptide (Lys-Gly) (interchain with G-Cter in SUMO2)). The short motif at Ile284–Lys297 is the PxVxL motif element. Lys297 is covalently cross-linked (Glycyl lysine isopeptide (Lys-Gly) (interchain with G-Cter in SUMO)). Residues Lys300 and Lys306 each participate in a glycyl lysine isopeptide (Lys-Gly) (interchain with G-Cter in SUMO2) cross-link. Phosphoserine occurs at positions 331 and 362. The interval Gly333–Ser478 is sufficient to mediate interaction with ETS1. The tract at residues Ile345 to Arg386 is disordered. Glycyl lysine isopeptide (Lys-Gly) (interchain with G-Cter in SUMO2) cross-links involve residues Lys366 and Lys387. A phosphoserine mark is found at Ser394, Ser407, Ser409, Ser410, and Ser451. The disordered stretch occupies residues Gly401–Glu596. A compositionally biased stretch (polar residues) spans Glu466–Glu482. Residues Ser530–Arg591 are compositionally biased toward basic residues. 2 short sequence motifs (nuclear localization signal) span residues Lys536 to Asp553 and Lys568 to Ile592. Lys594 participates in a covalent cross-link: Glycyl lysine isopeptide (Lys-Gly) (interchain with G-Cter in SUMO2). The SAND domain maps to Asp595 to Pro676. DNA-binding regions (HMG box) lie at residues Glu677–Ile753 and Pro769–Arg837. A Nuclear localization signal motif is present at residues Lys717–Phe734. Residues Ala835–Lys879 are disordered. Positions Ala838–Lys857 are enriched in basic residues. The span at Glu861–Lys879 shows a compositional bias: acidic residues.

As to quaternary structure, homodimer; isoforms are able to heterodimerize. Interacts with members of the HP1 family of nonhistone chromosomal protein, such as CBX5 and CBX3 via the PxVxL motif. Interacts with ETS1; the interaction is direct and modulates ETS1 transcriptional activity. Interacts with the MRN complex which is composed of two heterodimers RAD50/MRE11 associated with a single NBN; recruits the complex to PML-related bodies. Interacts with HIPK2; positively regulates TP53-dependent transcription. Interacts with CASP8AP2; may negatively regulate CASP8AP2 export from the nucleus to the cytoplasm. Interacts with SUMO1P1/SUMO5. (Microbial infection) Interacts with Epstein-Barr virus EBNA-LP; this interaction is important for EBNA-LP coactivator activity. In terms of assembly, (Microbial infection) Interacts with human cytomegalovirus/HHV-5 protein UL123; may play a role in infection by the virus. Post-translationally, sumoylated. Sumoylation depends on a functional nuclear localization signal but is not necessary for nuclear import or nuclear body targeting. Sumoylated. Sumoylated with SUMO1. Sumoylation depends on a functional nuclear localization signal but is not necessary for nuclear import or nuclear body targeting. Sumoylation may stabilize the interaction with CBX5. In terms of processing, (Microbial infection) Immediate early protein IE1 of human cytomegalovirus (HHV-5) interferes with the sumoylation of SP100. In terms of tissue distribution, widely expressed. Sp100-B is expressed only in spleen, tonsil, thymus, mature B-cell line and some T-cell line, but not in brain, liver, muscle or non-lymphoid cell lines.

It is found in the nucleus. The protein localises to the PML body. The protein resides in the nuclear body. Its subcellular location is the cytoplasm. Its function is as follows. Together with PML, this tumor suppressor is a major constituent of the PML bodies, a subnuclear organelle involved in a large number of physiological processes including cell growth, differentiation and apoptosis. Functions as a transcriptional coactivator of ETS1 and ETS2 according to PubMed:11909962. Under certain conditions, it may also act as a corepressor of ETS1 preventing its binding to DNA according to PubMed:15247905. Through the regulation of ETS1 it may play a role in angiogenesis, controlling endothelial cell motility and invasion. Through interaction with the MRN complex it may be involved in the regulation of telomeres lengthening. May also regulate TP53-mediated transcription and through CASP8AP2, regulate FAS-mediated apoptosis. Also plays a role in infection by viruses, including human cytomegalovirus and Epstein-Barr virus, through mechanisms that may involve chromatin and/or transcriptional regulation. The sequence is that of Nuclear autoantigen Sp-100 (SP100) from Homo sapiens (Human).